The following is a 220-amino-acid chain: Chloramphenicol acetyltransferase (220 aa).

His-195 acts as the Proton acceptor in catalysis.

It belongs to the chloramphenicol acetyltransferase family. Homotrimer.

The enzyme catalyses chloramphenicol + acetyl-CoA = chloramphenicol 3-acetate + CoA. Its function is as follows. This enzyme is an effector of chloramphenicol resistance in bacteria. This is Chloramphenicol acetyltransferase (cat) from Streptomyces acrimycini.